Reading from the N-terminus, the 693-residue chain is tRNA (guanine(37)-N(1))-methyltransferase (693 aa).

Residues arginine 327, 365–366, and 392–393 contribute to the S-adenosyl-L-methionine site; these read DI and DA. The interval 497 to 572 is disordered; sequence AGDSHQSNSH…QKAEDAPTNE (76 aa). The segment covering 500–512 has biased composition (low complexity); the sequence is SHQSNSHQSNPHE. Asparagine 591 serves as a coordination point for S-adenosyl-L-methionine.

It belongs to the class I-like SAM-binding methyltransferase superfamily. TRM5/TYW2 family. In terms of assembly, monomer.

It localises to the mitochondrion matrix. The protein resides in the nucleus. Its subcellular location is the cytoplasm. It carries out the reaction guanosine(37) in tRNA + S-adenosyl-L-methionine = N(1)-methylguanosine(37) in tRNA + S-adenosyl-L-homocysteine + H(+). Its function is as follows. Specifically methylates the N1 position of guanosine-37 in various cytoplasmic and mitochondrial tRNAs. Methylation is not dependent on the nature of the nucleoside 5' of the target nucleoside. This is the first step in the biosynthesis of wybutosine (yW), a modified base adjacent to the anticodon of tRNAs and required for accurate decoding. The chain is tRNA (guanine(37)-N(1))-methyltransferase from Plasmodium vivax (strain Salvador I).